Consider the following 402-residue polypeptide: Metacaspase-1 (402 aa).

The segment at 1 to 79 (MAYPGQGGHH…FAPPSGPIGP (79 aa)) is disordered. Residues 23-45 (PAPHGYAQPGYGYAPPSGPPQGY) show a composition bias toward low complexity. Residues His193 and Cys249 contribute to the active site.

The protein belongs to the peptidase C14B family.

Its function is as follows. Involved in cell death (apoptosis). The chain is Metacaspase-1 (MCA1) from Mycosarcoma maydis (Corn smut fungus).